The primary structure comprises 195 residues: FMN-dependent NADH:quinone oxidoreductase 2 (195 aa).

Residues Ser-16–Ser-18 and Met-85–Leu-88 each bind FMN.

The protein belongs to the azoreductase type 1 family. In terms of assembly, homodimer. FMN is required as a cofactor.

It carries out the reaction 2 a quinone + NADH + H(+) = 2 a 1,4-benzosemiquinone + NAD(+). It catalyses the reaction N,N-dimethyl-1,4-phenylenediamine + anthranilate + 2 NAD(+) = 2-(4-dimethylaminophenyl)diazenylbenzoate + 2 NADH + 2 H(+). In terms of biological role, quinone reductase that provides resistance to thiol-specific stress caused by electrophilic quinones. Its function is as follows. Also exhibits azoreductase activity. Catalyzes the reductive cleavage of the azo bond in aromatic azo compounds to the corresponding amines. The polypeptide is FMN-dependent NADH:quinone oxidoreductase 2 (Photobacterium profundum (strain SS9)).